The chain runs to 627 residues: Serine/threonine-protein kinase Nek5 (627 aa).

Residues 4–255 enclose the Protein kinase domain; that stretch reads FHLIKIIGEG…VTSLLKRPFL (252 aa). ATP contacts are provided by residues 10-18 and lysine 33; that span reads IGEGTFGKV. Aspartate 124 serves as the catalytic Proton acceptor. The segment covering 563–580 has biased composition (acidic residues); it reads QLEPGSDEDDIKFEESED. Disordered regions lie at residues 563–582 and 591–627; these read QLEP…EDEL and EKLA…KKLQ. Residues 609–619 are compositionally biased toward basic and acidic residues; the sequence is NAEEPGEKEKT.

It belongs to the protein kinase superfamily. NEK Ser/Thr protein kinase family. NIMA subfamily. The cofactor is Mg(2+).

The protein resides in the cell projection. It is found in the cilium. It localises to the flagellum. The catalysed reaction is L-seryl-[protein] + ATP = O-phospho-L-seryl-[protein] + ADP + H(+). It catalyses the reaction L-threonyl-[protein] + ATP = O-phospho-L-threonyl-[protein] + ADP + H(+). In Mus musculus (Mouse), this protein is Serine/threonine-protein kinase Nek5 (Nek5).